Reading from the N-terminus, the 378-residue chain is Erythronate-4-phosphate dehydrogenase (378 aa).

Residues S45 and T66 each contribute to the substrate site. Positions 146 and 175 each coordinate NAD(+). Residue R208 is part of the active site. NAD(+) is bound at residue D232. E237 is a catalytic residue. H254 serves as the catalytic Proton donor. NAD(+) is bound at residue G257. Residue Y258 coordinates substrate.

It belongs to the D-isomer specific 2-hydroxyacid dehydrogenase family. PdxB subfamily. In terms of assembly, homodimer.

It is found in the cytoplasm. It catalyses the reaction 4-phospho-D-erythronate + NAD(+) = (R)-3-hydroxy-2-oxo-4-phosphooxybutanoate + NADH + H(+). It participates in cofactor biosynthesis; pyridoxine 5'-phosphate biosynthesis; pyridoxine 5'-phosphate from D-erythrose 4-phosphate: step 2/5. Its function is as follows. Catalyzes the oxidation of erythronate-4-phosphate to 3-hydroxy-2-oxo-4-phosphonooxybutanoate. The chain is Erythronate-4-phosphate dehydrogenase from Pectobacterium atrosepticum (strain SCRI 1043 / ATCC BAA-672) (Erwinia carotovora subsp. atroseptica).